A 348-amino-acid chain; its full sequence is WD repeat-containing protein JIP5 (348 aa).

WD repeat units follow at residues 5–44 (KLKN…GETS), 51–90 (PSKR…MTRE), 94–132 (AHEC…SIRT), 135–174 (QHFD…STPL), 179–218 (DQED…ADSV), 223–261 (GHPA…FLGV), and 264–304 (THEE…EDSD). A compositionally biased stretch (acidic residues) spans 299 to 318 (LFEDSDEDDEMEEDEPDSDE). The segment at 299–348 (LFEDSDEDDEMEEDEPDSDEEKSKKKKKDNGMKDMSRGQAENDGSFFADL) is disordered.

This sequence belongs to the WD repeat WDR55 family.

Its subcellular location is the nucleus. The protein resides in the nucleolus. This is WD repeat-containing protein JIP5 (JIP5) from Cryptococcus neoformans var. neoformans serotype D (strain JEC21 / ATCC MYA-565) (Filobasidiella neoformans).